Reading from the N-terminus, the 166-residue chain is Lipoprotein signal peptidase (166 aa).

Helical transmembrane passes span 10–30 (LIWLLLSALVIGLDQWSKAWV), 68–88 (WQLWFFTALAMGISGLLAFWL), and 94–114 (GHWRSALPYALVIGGAIGNVI). Catalysis depends on residues aspartate 124 and aspartate 142. A helical transmembrane segment spans residues 138–158 (FNIADSAIVGGAIGIAVFGLF).

The protein belongs to the peptidase A8 family.

The protein localises to the cell inner membrane. It carries out the reaction Release of signal peptides from bacterial membrane prolipoproteins. Hydrolyzes -Xaa-Yaa-Zaa-|-(S,diacylglyceryl)Cys-, in which Xaa is hydrophobic (preferably Leu), and Yaa (Ala or Ser) and Zaa (Gly or Ala) have small, neutral side chains.. The protein operates within protein modification; lipoprotein biosynthesis (signal peptide cleavage). Functionally, this protein specifically catalyzes the removal of signal peptides from prolipoproteins. This is Lipoprotein signal peptidase from Xanthomonas oryzae pv. oryzae (strain MAFF 311018).